The chain runs to 238 residues: uncharacterized protein (238 aa).

Helical transmembrane passes span 75 to 95 (YAIF…HNFY), 116 to 136 (IVLI…FSLI), and 172 to 192 (IQGL…LEVI). The segment at 200–238 (DVEMSSMRGQAITTEPASDNTMAEETDCNTSKDVESGSN) is disordered. The span at 206–220 (MRGQAITTEPASDNT) shows a compositional bias: polar residues. Residues 229 to 238 (TSKDVESGSN) show a composition bias toward basic and acidic residues.

The protein localises to the membrane. This is an uncharacterized protein from Schizosaccharomyces pombe (strain 972 / ATCC 24843) (Fission yeast).